The sequence spans 303 residues: Sulfate adenylyltransferase subunit 2 (303 aa).

It belongs to the PAPS reductase family. CysD subfamily. As to quaternary structure, heterodimer composed of CysD, the smaller subunit, and CysN.

It carries out the reaction sulfate + ATP + H(+) = adenosine 5'-phosphosulfate + diphosphate. It participates in sulfur metabolism; hydrogen sulfide biosynthesis; sulfite from sulfate: step 1/3. In terms of biological role, with CysN forms the ATP sulfurylase (ATPS) that catalyzes the adenylation of sulfate producing adenosine 5'-phosphosulfate (APS) and diphosphate, the first enzymatic step in sulfur assimilation pathway. APS synthesis involves the formation of a high-energy phosphoric-sulfuric acid anhydride bond driven by GTP hydrolysis by CysN coupled to ATP hydrolysis by CysD. The sequence is that of Sulfate adenylyltransferase subunit 2 from Sulfurimonas denitrificans (strain ATCC 33889 / DSM 1251) (Thiomicrospira denitrificans (strain ATCC 33889 / DSM 1251)).